Consider the following 493-residue polypeptide: Amidophosphoribosyltransferase (493 aa).

Positions 1-26 (MIPTQPLTADLDCDLGLERPDRPEEA) are excised as a propeptide. C27 serves as the catalytic Nucleophile. The Glutamine amidotransferase type-2 domain maps to 27–252 (CGVFALYAPG…PGEMVRITDA (226 aa)). C268 is a [4Fe-4S] cluster binding site. The Mg(2+) site is built by S315, D377, and D378. 3 residues coordinate [4Fe-4S] cluster: C414, C465, and C468.

This sequence in the C-terminal section; belongs to the purine/pyrimidine phosphoribosyltransferase family. The cofactor is Mg(2+). [4Fe-4S] cluster serves as cofactor.

The catalysed reaction is 5-phospho-beta-D-ribosylamine + L-glutamate + diphosphate = 5-phospho-alpha-D-ribose 1-diphosphate + L-glutamine + H2O. It functions in the pathway purine metabolism; IMP biosynthesis via de novo pathway; N(1)-(5-phospho-D-ribosyl)glycinamide from 5-phospho-alpha-D-ribose 1-diphosphate: step 1/2. Catalyzes the formation of phosphoribosylamine from phosphoribosylpyrophosphate (PRPP) and glutamine. This chain is Amidophosphoribosyltransferase, found in Synechococcus elongatus (strain ATCC 33912 / PCC 7942 / FACHB-805) (Anacystis nidulans R2).